The sequence spans 811 residues: Ent-13-epi-manoyl oxide synthase KSL2, chloroplastic (811 aa).

The N-terminal 49 residues, 1-49 (MALPLSTCLLFHPKESRSRRFCFSPASAASLKSGLHSATSAKIASMPTC), are a transit peptide targeting the chloroplast. The Mg(2+) site is built by Asp550, Asp554, Asn694, and Glu702. The short motif at 550–554 (DDFFD) is the DDXXD motif element.

Belongs to the terpene synthase family. Mg(2+) is required as a cofactor.

The protein localises to the plastid. The protein resides in the chloroplast. The enzyme catalyses ent-8alpha-hydroxylabd-13-en-15-yl diphosphate = ent-13-epi-manoyl oxide + diphosphate. It functions in the pathway secondary metabolite biosynthesis; terpenoid biosynthesis. Involved in diterpenoid biosynthesis. Catalyzes the conversion of ent-8alpha-hydroxylabd-13-en-15-yl diphosphate to ent-13-epi-manoyl oxide. The chain is Ent-13-epi-manoyl oxide synthase KSL2, chloroplastic from Salvia miltiorrhiza (Chinese sage).